The primary structure comprises 317 residues: Urease accessory protein 6 (317 aa).

Belongs to the UreF family. As to quaternary structure, URE4, URE6 and URE7 may form a complex that acts as a GTP-hydrolysis-dependent molecular chaperone, activating the urease apoprotein URE1.

Functionally, urease accessory protein required for the maturation and activation of urease via the functional incorporation of the urease nickel metallocenter. Plays a role in host brain invasion. This Cryptococcus neoformans var. grubii serotype A (strain H99 / ATCC 208821 / CBS 10515 / FGSC 9487) (Filobasidiella neoformans var. grubii) protein is Urease accessory protein 6.